The sequence spans 349 residues: Homeobox protein engrailed (349 aa).

Disordered stretches follow at residues 26-53, 146-210, 228-252, and 327-349; these read DGPS…SPLS, GKET…PLPP, PSSG…EKRP, and STIP…ARIE. Composition is skewed to basic and acidic residues over residues 173–188 and 242–252; these read QMKK…RTES and DKAITPDEKRP. The segment at residues 249-308 is a DNA-binding region (homeobox); sequence EKRPRTAFTAEQLSRLKHEFNENRYLTERRRQDLARELGLHENQIKIWFQNNRAKLKKSS.

It belongs to the engrailed homeobox family.

The protein localises to the nucleus. This chain is Homeobox protein engrailed, found in Artemia franciscana (Brine shrimp).